The sequence spans 251 residues: uncharacterized protein (251 aa).

The tract at residues 207–251 (ATPHSKRGRTKLYRKEPPGDNRSPPPWQEPHGEGLAEKLSPGPAR) is disordered.

This is an uncharacterized protein from Treponema pallidum (strain Nichols).